The following is a 115-amino-acid chain: MALNWSFRVIFVSTMWCALLKFATLGEPKDDNDYGGGCPFVVLGNGTHAKPAGCSHLCNGAPETLDNIECYNVTEEVAKRMTPGIPYACWLGWCNKGECKRGNRTEVCYRGSEEE.

Positions 1–26 (MALNWSFRVIFVSTMWCALLKFATLG) are cleaved as a signal peptide. Disulfide bonds link cysteine 38/cysteine 58, cysteine 54/cysteine 94, cysteine 70/cysteine 99, and cysteine 89/cysteine 108. 3 N-linked (GlcNAc...) asparagine glycosylation sites follow: asparagine 45, asparagine 72, and asparagine 103.

The protein localises to the secreted. In terms of biological role, salivary chemokine-binding protein which binds to host chemokines CCL2, CCL3, CCL4, CCL8 and CCL18. The chain is Evasin P1182 from Amblyomma maculatum (Gulf Coast tick).